Consider the following 448-residue polypeptide: Putative vacuolar cation/proton exchanger 6 (448 aa).

The Cytoplasmic portion of the chain corresponds to 31 to 81 (MGLVNEVELKSLLEQETDSPQTNAASLMEQGSLRERRAKAPRNSVVQSFKI). A helical transmembrane segment spans residues 82 to 102 (VILSNKLNLLLPFGPLAILVH). Over 103–109 (YLTDNKG) the chain is Extracellular. The helical transmembrane segment at 110–130 (WFFLLSLVGITPLAERLGYAT) threads the bilayer. Residues 131–141 (EQLSCYTGATV) are Cytoplasmic-facing. A helical membrane pass occupies residues 142 to 162 (GGLLNATFGNVIELIISIIAL). Residues 150 to 185 (GNVIELIISIIALKNGMIRVVQLTLLGSILSNILLV) form a cation selection region. Residues 163–178 (KNGMIRVVQLTLLGSI) lie on the Extracellular side of the membrane. A helical transmembrane segment spans residues 179 to 199 (LSNILLVLGCAFFCGGLVFPG). The Cytoplasmic portion of the chain corresponds to 200–209 (KDQVFDKRNA). A helical membrane pass occupies residues 210-230 (VVSSGMLLMAVMGLLFPTFLH). The Extracellular segment spans residues 231-243 (YTHSEVHAGSSEL). The helical transmembrane segment at 244 to 264 (ALSRFISCIMLVAYAAYLFFQ) threads the bilayer. The Cytoplasmic portion of the chain corresponds to 265 to 295 (LKSQPSFYTEKTNQNEETSNDDEDPEISKWE). A helical membrane pass occupies residues 296-316 (AIIWLSIFTAWVSLLSGYLVD). Over 317–334 (AIEGTSVSWKIPISFISV) the chain is Extracellular. The helical transmembrane segment at 335 to 355 (ILLPIVGNAAEHAGAIMFAMK) threads the bilayer. The interval 341–376 (GNAAEHAGAIMFAMKDKLDLSLGVAIGSSIQISMFA) is cation selection. Residues 356-363 (DKLDLSLG) are Cytoplasmic-facing. A helical membrane pass occupies residues 364 to 384 (VAIGSSIQISMFAVPFCVVIG). Residues 385–393 (WMMGAQMDL) lie on the Extracellular side of the membrane. A helical membrane pass occupies residues 394–414 (NLQLFETATLLITVIVVAFFL). The Cytoplasmic portion of the chain corresponds to 415–425 (QLEGTSNYFKR). Residues 426–446 (LMLILCYLIVAASFFVHEDPH) traverse the membrane as a helical segment. The Extracellular segment spans residues 447 to 448 (QG).

This sequence belongs to the Ca(2+):cation antiporter (CaCA) (TC 2.A.19) family. Cation/proton exchanger (CAX) subfamily.

It localises to the vacuole membrane. In terms of biological role, vacuolar cation/proton exchanger (CAX). Translocates Ca(2+) and other metal ions into vacuoles using the proton gradient formed by H(+)-ATPase and H(+)-pyrophosphatase. In Arabidopsis thaliana (Mouse-ear cress), this protein is Putative vacuolar cation/proton exchanger 6 (CAX6).